Reading from the N-terminus, the 891-residue chain is Valine--tRNA ligase (891 aa).

A 'HIGH' region motif is present at residues 43–53 (PFTSGTLHLGH). The 'KMSKS' region signature appears at 536 to 540 (KMSKS). Residue K539 participates in ATP binding.

This sequence belongs to the class-I aminoacyl-tRNA synthetase family. ValS type 2 subfamily.

Its subcellular location is the cytoplasm. The catalysed reaction is tRNA(Val) + L-valine + ATP = L-valyl-tRNA(Val) + AMP + diphosphate. Its function is as follows. Catalyzes the attachment of valine to tRNA(Val). As ValRS can inadvertently accommodate and process structurally similar amino acids such as threonine, to avoid such errors, it has a 'posttransfer' editing activity that hydrolyzes mischarged Thr-tRNA(Val) in a tRNA-dependent manner. This chain is Valine--tRNA ligase, found in Pyrococcus horikoshii (strain ATCC 700860 / DSM 12428 / JCM 9974 / NBRC 100139 / OT-3).